Consider the following 591-residue polypeptide: Aspartate--tRNA(Asp/Asn) ligase (591 aa).

Residue glutamate 175 coordinates L-aspartate. The aspartate stretch occupies residues 199–202; the sequence is QQFK. Arginine 221 and histidine 453 together coordinate L-aspartate. Residue 221 to 223 participates in ATP binding; sequence RDE. Residue glutamate 486 coordinates ATP. Arginine 493 contacts L-aspartate. 538–541 lines the ATP pocket; sequence GIDR.

Belongs to the class-II aminoacyl-tRNA synthetase family. Type 1 subfamily. In terms of assembly, homodimer.

The protein resides in the cytoplasm. It catalyses the reaction tRNA(Asx) + L-aspartate + ATP = L-aspartyl-tRNA(Asx) + AMP + diphosphate. Aspartyl-tRNA synthetase with relaxed tRNA specificity since it is able to aspartylate not only its cognate tRNA(Asp) but also tRNA(Asn). Reaction proceeds in two steps: L-aspartate is first activated by ATP to form Asp-AMP and then transferred to the acceptor end of tRNA(Asp/Asn). In Paracoccus denitrificans (strain Pd 1222), this protein is Aspartate--tRNA(Asp/Asn) ligase.